We begin with the raw amino-acid sequence, 185 residues long: ATP synthase subunit b 2 (185 aa).

The disordered stretch occupies residues 1–23 (MAEGHGDAKGATAHTAADGGHKA). Positions 9 to 18 (KGATAHTAAD) are enriched in low complexity. A helical membrane pass occupies residues 37–57 (LVSLTIAFVALYLIVSKIILP).

The protein belongs to the ATPase B chain family. F-type ATPases have 2 components, F(1) - the catalytic core - and F(0) - the membrane proton channel. F(1) has five subunits: alpha(3), beta(3), gamma(1), delta(1), epsilon(1). F(0) has three main subunits: a(1), b(2) and c(10-14). The alpha and beta chains form an alternating ring which encloses part of the gamma chain. F(1) is attached to F(0) by a central stalk formed by the gamma and epsilon chains, while a peripheral stalk is formed by the delta and b chains.

The protein resides in the cell inner membrane. Its function is as follows. F(1)F(0) ATP synthase produces ATP from ADP in the presence of a proton or sodium gradient. F-type ATPases consist of two structural domains, F(1) containing the extramembraneous catalytic core and F(0) containing the membrane proton channel, linked together by a central stalk and a peripheral stalk. During catalysis, ATP synthesis in the catalytic domain of F(1) is coupled via a rotary mechanism of the central stalk subunits to proton translocation. Functionally, component of the F(0) channel, it forms part of the peripheral stalk, linking F(1) to F(0). The b'-subunit is a diverged and duplicated form of b found in plants and photosynthetic bacteria. This Rhodopseudomonas palustris (strain BisB5) protein is ATP synthase subunit b 2 (atpF2).